Reading from the N-terminus, the 455-residue chain is Bifunctional protein GlmU (455 aa).

Residues 1–226 (MSLDIVILAA…AMEVQGANDR (226 aa)) are pyrophosphorylase. Residues 8-11 (LAAG), lysine 22, glutamine 73, 78-79 (GT), 99-101 (YGD), glycine 136, glutamate 151, asparagine 166, and asparagine 224 contribute to the UDP-N-acetyl-alpha-D-glucosamine site. Aspartate 101 is a Mg(2+) binding site. Asparagine 224 contributes to the Mg(2+) binding site. A linker region spans residues 227-247 (RQLSELERHYQLREGRRLMAQ). The interval 248–455 (GVTLRDPARF…WKRPEKIKKS (208 aa)) is N-acetyltransferase. Positions 330 and 348 each coordinate UDP-N-acetyl-alpha-D-glucosamine. Histidine 360 (proton acceptor) is an active-site residue. 2 residues coordinate UDP-N-acetyl-alpha-D-glucosamine: tyrosine 363 and asparagine 374. Residues alanine 377, 383–384 (NY), serine 402, alanine 420, and arginine 437 contribute to the acetyl-CoA site.

In the N-terminal section; belongs to the N-acetylglucosamine-1-phosphate uridyltransferase family. The protein in the C-terminal section; belongs to the transferase hexapeptide repeat family. Homotrimer. It depends on Mg(2+) as a cofactor.

The protein resides in the cytoplasm. The enzyme catalyses alpha-D-glucosamine 1-phosphate + acetyl-CoA = N-acetyl-alpha-D-glucosamine 1-phosphate + CoA + H(+). The catalysed reaction is N-acetyl-alpha-D-glucosamine 1-phosphate + UTP + H(+) = UDP-N-acetyl-alpha-D-glucosamine + diphosphate. Its pathway is nucleotide-sugar biosynthesis; UDP-N-acetyl-alpha-D-glucosamine biosynthesis; N-acetyl-alpha-D-glucosamine 1-phosphate from alpha-D-glucosamine 6-phosphate (route II): step 2/2. The protein operates within nucleotide-sugar biosynthesis; UDP-N-acetyl-alpha-D-glucosamine biosynthesis; UDP-N-acetyl-alpha-D-glucosamine from N-acetyl-alpha-D-glucosamine 1-phosphate: step 1/1. It functions in the pathway bacterial outer membrane biogenesis; LPS lipid A biosynthesis. Functionally, catalyzes the last two sequential reactions in the de novo biosynthetic pathway for UDP-N-acetylglucosamine (UDP-GlcNAc). The C-terminal domain catalyzes the transfer of acetyl group from acetyl coenzyme A to glucosamine-1-phosphate (GlcN-1-P) to produce N-acetylglucosamine-1-phosphate (GlcNAc-1-P), which is converted into UDP-GlcNAc by the transfer of uridine 5-monophosphate (from uridine 5-triphosphate), a reaction catalyzed by the N-terminal domain. The chain is Bifunctional protein GlmU from Pseudomonas putida (strain ATCC 700007 / DSM 6899 / JCM 31910 / BCRC 17059 / LMG 24140 / F1).